Consider the following 772-residue polypeptide: uncharacterized protein (772 aa).

2 consecutive transmembrane segments (helical) span residues 16–36 and 301–321; these read LITF…LFSY and IGWI…LFSW. Residues 670 to 768 enclose the HTH araC/xylS-type domain; that stretch reads DNIIHIIHHE…GITPGNYRQQ (99 aa). 2 consecutive DNA-binding regions (H-T-H motif) follow at residues 687–708 and 735–758; these read DEIA…KKEM and VKDI…KKLE.

The protein localises to the cell membrane. This is an uncharacterized protein from Bacillus subtilis (strain 168).